Consider the following 639-residue polypeptide: Probable potassium transport system protein Kup 1 (639 aa).

The next 12 helical transmembrane spans lie at Ala-27–Phe-47, Val-64–Ile-84, Val-115–Pro-135, Pro-151–Ile-171, Phe-182–Ile-202, Gly-225–Leu-245, Trp-261–Leu-281, Leu-293–Ile-313, Ile-351–Phe-371, Leu-377–Phe-397, Ile-408–Ala-428, and Leu-430–Ile-450.

The protein belongs to the HAK/KUP transporter (TC 2.A.72) family.

It is found in the cell inner membrane. It catalyses the reaction K(+)(in) + H(+)(in) = K(+)(out) + H(+)(out). In terms of biological role, transport of potassium into the cell. Likely operates as a K(+):H(+) symporter. This Agrobacterium fabrum (strain C58 / ATCC 33970) (Agrobacterium tumefaciens (strain C58)) protein is Probable potassium transport system protein Kup 1.